We begin with the raw amino-acid sequence, 30 residues long: Mejucin (30 aa).

It localises to the secreted. Bacteriocin that inhibits the growth of several Gram-positive bacteria, especially the food-borne pathogens L.monocytogenes, B.cereus strain ATCC 11778, B.cereus strain ATCC 21366, B.cereus strain ATCC 10876 and B.cereus strain ATCC 14579. Likely to act by disrupting the pathogen membrane resulting in leakage of intracellular constituents. Does not inhibit the growth of Gram-negative bacteria. This chain is Mejucin, found in Bacillus subtilis.